The primary structure comprises 474 residues: MAYIQLEPLNEGFLSRISDLLLCRWTCRHCCQKCYESSCCQSSEDEVEILGPFPAQTPPWLMASRSSDKDGDSVHTASEVPLTPRTNSPDGRRSSSDTSKSTYSLTRRISSLESRRPSSPLIDIKPIEFGVLSAKKEPIQPSVLRRTYTPDDYFRKFEPHLYSLDPNSDDVDSLTDEEILSKYQLGMLHFSTQYDLLHNHLTVRVIEARDLPPPISHDGSRQDMAHSNPYVKICLLPDQKNSKQTGVKRKTQKPVFEERYTFEIPFLEAQRRTLLLTVVDFDKFSRHCVIGKVSVPLCEVDLVKGGHWWKALIPSSQNEVELGELLLSLNYLPSAGRLNVDVIRAKQLLQTDVSQGSDPFVKIQLVHGLKLVKTKKTSFLRGTIDPFYNESFSFKVPQEELENASLVFTVFGHNMKSSNDFIGRIVIGQYSSGPSESNHWRRMLNTHRTAVEQWHSLRSRAECDRVSPASLEVT.

The segment at 60 to 112 (WLMASRSSDKDGDSVHTASEVPLTPRTNSPDGRRSSSDTSKSTYSLTRRISSL) is disordered. Low complexity predominate over residues 96-112 (SDTSKSTYSLTRRISSL). Residues S118 and S119 each carry the phosphoserine modification. 2 C2 domains span residues 184–310 (QLGM…HWWK) and 321–455 (ELGE…EQWH).

This sequence belongs to the synaptotagmin family.

The protein resides in the membrane. Its function is as follows. Plays a role in dendrite formation by melanocytes. The sequence is that of Synaptotagmin-17 (SYT17) from Pongo abelii (Sumatran orangutan).